We begin with the raw amino-acid sequence, 502 residues long: Glycerol kinase (502 aa).

Residue T14 participates in ADP binding. ATP contacts are provided by T14, T15, and S16. T14 lines the sn-glycerol 3-phosphate pocket. Residue R18 participates in ADP binding. Sn-glycerol 3-phosphate is bound by residues R84, E85, Y136, and D246. Glycerol contacts are provided by R84, E85, Y136, D246, and Q247. Residues T268 and G311 each contribute to the ADP site. Positions 268, 311, 315, and 412 each coordinate ATP. The ADP site is built by G412 and N416.

This sequence belongs to the FGGY kinase family. In terms of assembly, homotetramer and homodimer (in equilibrium). Heterodimer with EIIA-Glc. Binds 1 zinc ion per glycerol kinase EIIA-Glc dimer. The zinc ion is important for dimerization.

It catalyses the reaction glycerol + ATP = sn-glycerol 3-phosphate + ADP + H(+). It functions in the pathway polyol metabolism; glycerol degradation via glycerol kinase pathway; sn-glycerol 3-phosphate from glycerol: step 1/1. Its activity is regulated as follows. Activity of this regulatory enzyme is affected by several metabolites. Allosterically and non-competitively inhibited by fructose 1,6-bisphosphate (FBP) and unphosphorylated phosphocarrier protein EIIA-Glc (III-Glc), an integral component of the bacterial phosphotransferase (PTS) system. In terms of biological role, key enzyme in the regulation of glycerol uptake and metabolism. Catalyzes the phosphorylation of glycerol to yield sn-glycerol 3-phosphate. In Escherichia coli (strain ATCC 8739 / DSM 1576 / NBRC 3972 / NCIMB 8545 / WDCM 00012 / Crooks), this protein is Glycerol kinase.